Reading from the N-terminus, the 124-residue chain is uncharacterized protein (124 aa).

The tract at residues 1-28 is disordered; it reads MGTSLRSQSFREPRPSYGRLHESQGRSL. A compositionally biased stretch (basic and acidic residues) spans 9-28; that stretch reads SFREPRPSYGRLHESQGRSL.

This is an uncharacterized protein from Mus musculus (Mouse).